The chain runs to 1020 residues: 5'-3' exoribonuclease 3 (1020 aa).

A disordered region spans residues 113-144 (QQRSRRFRSAKDASDAAAEEERLREEFEREGR). A compositionally biased stretch (basic and acidic residues) spans 121-144 (SAKDASDAAAEEERLREEFEREGR). The CCHC-type zinc finger occupies 262 to 279 (ERCFLCGQMGHFASNCEG). Disordered stretches follow at residues 411 to 440 (QHQR…TVQP) and 452 to 483 (RLAS…PGSS). Basic and acidic residues predominate over residues 414-433 (RQAERVKRDKAGKATKRMDD). Residues 487-523 (AIVDVENSLESDERENKEELKTKLKELIREKSDAFNS) adopt a coiled-coil conformation. Over residues 831–844 (NNHGMHNNHGMHNN) the composition is skewed to low complexity. Disordered stretches follow at residues 831 to 859 (NNHG…GRHL), 875 to 897 (TDRY…PQYV), and 911 to 1020 (PGAQ…RHRY). Low complexity-rich tracts occupy residues 911-923 (PGAQ…APYQ) and 960-972 (GNHQ…QQWH). A compositionally biased stretch (basic residues) spans 1000–1020 (RGRGRGSHHHHDQGGNPRHRY).

It belongs to the 5'-3' exonuclease family. XRN2/RAT1 subfamily. As to expression, expressed in roots, leaves, stems and flowers.

Its subcellular location is the nucleus. Functionally, possesses 5'-&gt;3' exoribonuclease activity. Acts as an endogenous post-transcriptional gene silencing (PTGS) suppressor. Degrades miRNA-derived loops, excised during miRNA maturation in the nucleus. Required for proper development. Involved in pre-rRNA processing. Involved with XRN2 in the 5'-end exonucleolytic processing of 5.8S and 25S rRNAs. Contributes with XRN2 to polyadenylation-dependent nuclear RNA surveillance. Involved in the degradation of aberrant polyadenylated pre-rRNA through 5'-end processing. The sequence is that of 5'-3' exoribonuclease 3 from Arabidopsis thaliana (Mouse-ear cress).